Consider the following 3374-residue polypeptide: Abnormal spindle-like microcephaly-associated protein homolog (3374 aa).

4 positions are modified to phosphoserine: serine 212, serine 215, serine 300, and serine 325. The interval 492–518 is disordered; that stretch reads SSKNIVTPPCKAASVARKRKSKGHTGD. Residue serine 540 is modified to Phosphoserine. In terms of domain architecture, Calponin-homology (CH) 1 spans 855–991; it reads KASXDILLAF…LLWKIALAFQ (137 aa). Residues 992-1013 are a coiled coil; the sequence is VDISLNLDQLKEEIDFLKKTQS. Serine 1038 carries the post-translational modification Phosphoserine. In terms of domain architecture, Calponin-homology (CH) 2 spans 1045–1196; that stretch reads SESVKLLMDW…YLSFLCARLL (152 aa). 41 IQ domains span residues 1201–1230, 1282–1313, 1472–1503, 1567–1596, 1590–1619, 1613–1642, 1647–1678, 1720–1749, 1743–1772, 1793–1822, 1816–1847, 1866–1897, 1939–1968, 1962–1993, 2012–2043, 2035–2066, 2085–2116, 2108–2137, 2158–2189, 2181–2212, 2230–2261, 2253–2284, 2303–2334, 2326–2357, 2376–2407, 2399–2430, 2449–2480, 2472–2503, 2542–2573, 2583–2612, 2606–2637, 2656–2685, 2732–2763, 2777–2806, 2827–2856, 2850–2881, 2872–2903, 2947–2976, 2997–3028, 3099–3128, and 3122–3153; these read ETRAARLIQTTWRQYKLKKDLKHHQERDKA, HSKSASIIQRYWRRYSTRKQFLKLKYYSIILQ, KRAAAIRLQAAFRGRRARNLCKQIRAACVLQS, TRSAVIVLQSACRRMQARKKFLHILTAVVK, ILTAVVKIQSYYRAYASRRKFLRLKKATVK, LKKATVKLQSIVRMKQARKQYLHLRAIAQQ, LRASCIKLQAFLRGYLVRKQVRLQRKAAVLLQ, VRRAVTCLQAAYRGYKVRRQLQQQSAAALK, QSAAALKIQAAFRGYRQRTKYQSMLQSALK, TRTAAISLQSAYRGWKVRKQMRKEHEAAVK, EHEAAVKIQSAFRTARAQKEFRLLKTAASVIQ, LRRAAVTLQSAWRGRAARRRIQKQQRCAIIIQ, TKGAAIILQSAFRGVRARKKVKEMHQAATT, MHQAATTIQSRYRAYQARKKYASYRAAAVIIQ, VKKAALKIQAVYRGVRERRQTRRMHMAATLIK, MHMAATLIKAAFKMQQSRRRYQQMRTAAIVIQ, TLKAVALLQAALRGARVRQNLRRMRTAATLIQ, MRTAATLIQAHYRGRRQQAYFNKLKKVTKT, LRRSAICIQAAFRGMRARKRLKAMHSAAAVIQ, MHSAAAVIQRRFRTLVMRRRFLSLRKTAVWVQ, LQKAAIKIQSWYRGWMVRKKTQEMRRAATVLQ, MRRAATVLQAAFRRHRARARYQAWRRASQVIQ, QXRSALVLQAAFRGMRIRRRLKRMHASATLIQ, MHASATLIQSRFRSVRVRKRFLSLKKAAVFVQ, LKKAIIIIQAFYRRRMVKKQLQEMHRAAALIQ, MHRAAALIQASFRMHRARLAFQTWKLAXVLIQ, WRHSAVVIQAAYKGLKARQLLREKHRAAVIIQ, KHRAAVIIQSTYRMYRQHFSYQKLQWATKVIQ, QHQAAITVQKHFRAFKTRKRYLHFRAKVVFVQ, RTQAAICIQSCFRGFKARRGIQGMHLAATR, MHLAATRIQSCYRRHRARADYQAKKRAVVVIQ, IQKSARTIQAAFRGMKVRQKLKTMPDEKMA, QRKAAVTIQKAFRKMVTRRLEKQRSAAVQIQS, QKRAALTLQRYFRTQQSRKRFLLYREAAVG, IRSSVIIIQARVKGFIQKRKFRKLKDSTIK, LKDSTIKIQAVWRRHKARKYLREVKAACRIQA, EVKAACRIQAWYRCRKARKEYLAVLRAVRIIQ, RHQAACLIQANFRGYKARQVFLQQKSAALT, LKKSTVVLQALVRGWLVRKRISEQRAKIRLLH, HSRAASVIQRAVRHFLLRKKQENLNKRIAK, and LNKRIAKIQALWRGYSWRKKNDTSKTKAIRQR.

It is found in the cytoplasm. The protein resides in the cytoskeleton. Its subcellular location is the spindle. It localises to the nucleus. In terms of biological role, probable role in mitotic spindle regulation and coordination of mitotic processes. May have a preferential role in regulating neurogenesis. This chain is Abnormal spindle-like microcephaly-associated protein homolog (ASPM), found in Ovis aries (Sheep).